Here is a 274-residue protein sequence, read N- to C-terminus: Halorhodopsin (274 aa).

Positions 1-21 are excised as a propeptide; the sequence is MSITSVPGVVDAGVLGAQSAA. At 22–25 the chain is on the extracellular side; sequence AVRE. A helical membrane pass occupies residues 26–51; the sequence is NALLSSSLWVNVALAGIAILVFVYMG. Residues 52–57 lie on the Cytoplasmic side of the membrane; sequence RTIRPG. Residues 58–81 form a helical membrane-spanning segment; sequence RPRLIWGATLMIPLVSISSYLGLL. Over 82–105 the chain is Extracellular; sequence SGLTVGMIEMPAGHALAGEMVRSQ. Q105, T111, and S115 together coordinate chloride. The helical transmembrane segment at 106-127 threads the bilayer; that stretch reads WGRYLTWALSTPMILLALGLLA. Over 128–130 the chain is Cytoplasmic; that stretch reads DVD. Residues 131–154 traverse the membrane as a helical segment; that stretch reads LGSLFTVIAADIGMCVTGLAAAMT. The Extracellular segment spans residues 155–157; sequence TSA. Residues 158–180 traverse the membrane as a helical segment; sequence LLFRWAFYAISCAFFVVVLSALV. Residues 181 to 192 are Cytoplasmic-facing; the sequence is TDWAASASSAGT. Residues 193–216 traverse the membrane as a helical segment; it reads AEIFDTLRVLTVVLWLGYPIVWAV. The Extracellular portion of the chain corresponds to 217–226; the sequence is GVEGLALVQS. Residues 227–255 traverse the membrane as a helical segment; the sequence is VGVTSWAYSVLDVFAKYVFAFILLRWVAN. At K242 the chain carries N6-(retinylidene)lysine. The Cytoplasmic portion of the chain corresponds to 256–274; the sequence is NERTVAVAGQTLGTMSSDD.

This sequence belongs to the archaeal/bacterial/fungal opsin family. Homotrimer.

Its subcellular location is the cell membrane. Functionally, light-driven chloride pump. The chain is Halorhodopsin (hop) from Halobacterium salinarum (strain ATCC 29341 / DSM 671 / R1).